The primary structure comprises 1263 residues: Histone-lysine N-methyltransferase EHMT2 (1263 aa).

Disordered stretches follow at residues 1–314 (MRGL…LEEW) and 332–439 (DERV…EYME). The span at 26 to 39 (GRGRGGAHRGRGRP) shows a compositional bias: basic residues. At Arg-40 the chain carries Asymmetric dimethylarginine. Positions 83-95 (LEKEPRGAAERVH) are enriched in basic and acidic residues. Residue Ser-97 is modified to Phosphoserine. Thr-101 is modified (phosphothreonine). 2 positions are modified to phosphoserine: Ser-104 and Ser-193. Lys-239 bears the N6,N6,N6-trimethyllysine; by EHMT2; alternate mark. N6,N6-dimethyllysine; by EHMT2; alternate is present on Lys-239. Residues 252-270 (PEKRPPEVQHFRMSDDMHL) show a composition bias toward basic and acidic residues. Residues Lys-272 and Lys-282 each participate in a glycyl lysine isopeptide (Lys-Gly) (interchain with G-Cter in SUMO2) cross-link. Phosphoserine occurs at positions 285, 294, and 298. 2 stretches are compositionally biased toward basic and acidic residues: residues 302 to 312 (ILEKGEPRPLE) and 332 to 343 (DERVDSDSKSEV). Over residues 350-380 (LSEEEEEEEEEEEEEEEEEEEEEEEEEDEES) the composition is skewed to acidic residues. Positions 391–400 (GRRKAKKKWR) are enriched in basic residues. Ser-403, Ser-465, and Ser-466 each carry phosphoserine. Thr-608 carries the post-translational modification Phosphothreonine. A disordered region spans residues 621-647 (LAHDAPGRADTSQPSARMRGHGEPRRP). Residue Lys-687 forms a Glycyl lysine isopeptide (Lys-Gly) (interchain with G-Cter in SUMO2) linkage. ANK repeat units lie at residues 702–731 (FHPR…DPNF), 737–766 (SKRT…NINA), 770–799 (QQRT…CVYS), 803–833 (DGST…DVNA), 837–866 (GGWT…DVTL), 870–899 (EENI…DLHA), and 903–932 (HGDT…NPEL). Residues 870–872 (EEN) form a histone H3K9me binding region. The Pre-SET domain maps to 1025–1088 (QHCTCVDDCS…SCKNRVVQSG (64 aa)). The Zn(2+) site is built by Cys-1027, Cys-1029, Cys-1033, Cys-1038, Cys-1040, Cys-1070, Cys-1074, Cys-1076, and Cys-1080. The SET domain occupies 1091–1208 (VRLQLYRTAK…TGEELGFDYG (118 aa)). Residues 1101–1103 (MGW), Tyr-1138, and 1165–1166 (NH) each bind S-adenosyl-L-methionine. The segment at 1127-1146 (DAEADVREDDSYLFDLDNKD) is interaction with histone H3. Residue Cys-1168 participates in Zn(2+) binding. The tract at residues 1207–1210 (YGDR) is interaction with histone H3. The region spanning 1217–1233 (KYFTCQCGSEKCKHSAE) is the Post-SET domain. Residues Cys-1221, Cys-1223, and Cys-1228 each contribute to the Zn(2+) site. Ser-1257 carries the post-translational modification Phosphoserine. Thr-1263 carries the phosphothreonine modification.

The protein belongs to the class V-like SAM-binding methyltransferase superfamily. Histone-lysine methyltransferase family. Suvar3-9 subfamily. Heterodimer; heterodimerizes with EHMT1/GLP. Interacts with GFI1B and WIZ. Part of the E2F6.com-1 complex in G0 phase composed of E2F6, MGA, MAX, TFDP1, CBX3, BAT8, EHMT1, RING1, RNF2, MBLR, L3MBTL2 and YAF2. Part of a complex composed of TRIM28, HDAC1, HDAC2 and EHMT2. Interacts with UHRF1. Interacts with CDYL. Interacts with REST only in the presence of CDYL. Part of a complex containing at least CDYL, REST, WIZ, SETB1, EHMT1 and EHMT2. Interacts with PRDM9 and CDYL; interaction only takes place when PRDM9 is bound to hotspot DNA. Interacts with SMYD5. Post-translationally, methylated at Lys-239; automethylated. Ubiquitous.

Its subcellular location is the nucleus. The protein resides in the chromosome. It catalyses the reaction N(6)-methyl-L-lysyl(9)-[histone H3] + S-adenosyl-L-methionine = N(6),N(6)-dimethyl-L-lysyl(9)-[histone H3] + S-adenosyl-L-homocysteine + H(+). The enzyme catalyses L-lysyl(9)-[histone H3] + S-adenosyl-L-methionine = N(6)-methyl-L-lysyl(9)-[histone H3] + S-adenosyl-L-homocysteine + H(+). Its function is as follows. Histone methyltransferase that specifically mono- and dimethylates 'Lys-9' of histone H3 (H3K9me1 and H3K9me2, respectively) in euchromatin. H3K9me represents a specific tag for epigenetic transcriptional repression by recruiting HP1 proteins to methylated histones. Also mediates monomethylation of 'Lys-56' of histone H3 (H3K56me1) in G1 phase, leading to promote interaction between histone H3 and PCNA and regulating DNA replication. Also weakly methylates 'Lys-27' of histone H3 (H3K27me). Also required for DNA methylation, the histone methyltransferase activity is not required for DNA methylation, suggesting that these 2 activities function independently. Probably targeted to histone H3 by different DNA-binding proteins like E2F6, MGA, MAX and/or DP1. May also methylate histone H1. In addition to the histone methyltransferase activity, also methylates non-histone proteins: mediates dimethylation of 'Lys-373' of p53/TP53. Also methylates CDYL, WIZ, ACIN1, DNMT1, HDAC1, ERCC6, KLF12 and itself. This chain is Histone-lysine N-methyltransferase EHMT2 (Ehmt2), found in Mus musculus (Mouse).